A 267-amino-acid chain; its full sequence is Glutamate racemase (267 aa).

Residues 10 to 11 and 42 to 43 each bind substrate; these read DS and YG. C73 (proton donor/acceptor) is an active-site residue. 74–75 serves as a coordination point for substrate; the sequence is NT. C183 functions as the Proton donor/acceptor in the catalytic mechanism. 184–185 provides a ligand contact to substrate; that stretch reads TH.

Belongs to the aspartate/glutamate racemases family.

It catalyses the reaction L-glutamate = D-glutamate. Its pathway is cell wall biogenesis; peptidoglycan biosynthesis. In terms of biological role, provides the (R)-glutamate required for cell wall biosynthesis. The polypeptide is Glutamate racemase (Limosilactobacillus reuteri (strain DSM 20016) (Lactobacillus reuteri)).